A 914-amino-acid chain; its full sequence is Protein translocase subunit SecA (914 aa).

ATP is bound by residues Q87, 105–109, and D508; that span reads GEGKT. Zn(2+)-binding residues include C898, C900, C909, and H910.

It belongs to the SecA family. Monomer and homodimer. Part of the essential Sec protein translocation apparatus which comprises SecA, SecYEG and auxiliary proteins SecDF-YajC and YidC. The cofactor is Zn(2+).

It localises to the cell inner membrane. It is found in the cytoplasm. The catalysed reaction is ATP + H2O + cellular proteinSide 1 = ADP + phosphate + cellular proteinSide 2.. Part of the Sec protein translocase complex. Interacts with the SecYEG preprotein conducting channel. Has a central role in coupling the hydrolysis of ATP to the transfer of proteins into and across the cell membrane, serving both as a receptor for the preprotein-SecB complex and as an ATP-driven molecular motor driving the stepwise translocation of polypeptide chains across the membrane. The protein is Protein translocase subunit SecA of Xylella fastidiosa (strain M23).